The following is a 231-amino-acid chain: Large ribosomal subunit protein uL1 (231 aa).

This sequence belongs to the universal ribosomal protein uL1 family. Part of the 50S ribosomal subunit.

Binds directly to 23S rRNA. The L1 stalk is quite mobile in the ribosome, and is involved in E site tRNA release. In terms of biological role, protein L1 is also a translational repressor protein, it controls the translation of the L11 operon by binding to its mRNA. The sequence is that of Large ribosomal subunit protein uL1 from Polaromonas sp. (strain JS666 / ATCC BAA-500).